Consider the following 317-residue polypeptide: Ribosomal RNA large subunit methyltransferase F (317 aa).

This sequence belongs to the methyltransferase superfamily. METTL16/RlmF family.

The protein resides in the cytoplasm. It catalyses the reaction adenosine(1618) in 23S rRNA + S-adenosyl-L-methionine = N(6)-methyladenosine(1618) in 23S rRNA + S-adenosyl-L-homocysteine + H(+). Functionally, specifically methylates the adenine in position 1618 of 23S rRNA. The chain is Ribosomal RNA large subunit methyltransferase F from Pseudomonas putida (strain ATCC 700007 / DSM 6899 / JCM 31910 / BCRC 17059 / LMG 24140 / F1).